We begin with the raw amino-acid sequence, 355 residues long: Probable butyrate kinase (355 aa).

This sequence belongs to the acetokinase family.

It is found in the cytoplasm. The catalysed reaction is butanoate + ATP = butanoyl phosphate + ADP. The chain is Probable butyrate kinase from Clostridium botulinum (strain Alaska E43 / Type E3).